A 346-amino-acid polypeptide reads, in one-letter code: tRNA N6-adenosine threonylcarbamoyltransferase (346 aa).

2 residues coordinate Fe cation: H111 and H115. Substrate contacts are provided by residues 134 to 138, D167, G180, and N279; that span reads LVSGG. A Fe cation-binding site is contributed by D307.

This sequence belongs to the KAE1 / TsaD family. It depends on Fe(2+) as a cofactor.

It localises to the cytoplasm. The catalysed reaction is L-threonylcarbamoyladenylate + adenosine(37) in tRNA = N(6)-L-threonylcarbamoyladenosine(37) in tRNA + AMP + H(+). Functionally, required for the formation of a threonylcarbamoyl group on adenosine at position 37 (t(6)A37) in tRNAs that read codons beginning with adenine. Is involved in the transfer of the threonylcarbamoyl moiety of threonylcarbamoyl-AMP (TC-AMP) to the N6 group of A37, together with TsaE and TsaB. TsaD likely plays a direct catalytic role in this reaction. This is tRNA N6-adenosine threonylcarbamoyltransferase from Burkholderia mallei (strain ATCC 23344).